The following is a 361-amino-acid chain: POU domain, class 3, transcription factor 4 (361 aa).

2 disordered regions span residues 99–131 (PHVA…GQPL) and 144–192 (MLEH…PTSD). Positions 122–131 (PSITSSGQPL) are enriched in polar residues. Basic and acidic residues predominate over residues 165-183 (VLREPPDHGELGSHHCQDH). Residues 186–260 (EETPTSDELE…LLNKWLEEAD (75 aa)) enclose the POU-specific domain. Serine 265 carries the phosphoserine modification. A DNA-binding region (homeobox) is located at residues 278–337 (KRKKRTSIEVSVKGVLETHFLKCPKPAAQEISSLADSLQLEKEVVRVWFCNRRQKEKRMT).

Belongs to the POU transcription factor family. Class-3 subfamily. As to quaternary structure, interacts with HNRNPU. As to expression, brain specific.

It localises to the nucleus. Its function is as follows. Probable transcription factor which exert its primary action widely during early neural development and in a very limited set of neurons in the mature brain. In Homo sapiens (Human), this protein is POU domain, class 3, transcription factor 4 (POU3F4).